The following is a 508-amino-acid chain: Photosystem II CP47 reaction center protein (508 aa).

The next 6 helical transmembrane spans lie at 21 to 36 (AVHIMHTALVAGWAGS), 101 to 115 (IVFSGLCFLAAIWHW), 140 to 156 (GIHLFLAGLACFGFGAF), 203 to 218 (IAAGTLGILAGLFHLS), 237 to 252 (VLSSSIAAVFFAAFVV), and 457 to 472 (SFALLFFFGHIWHGSR).

Belongs to the PsbB/PsbC family. PsbB subfamily. As to quaternary structure, PSII is composed of 1 copy each of membrane proteins PsbA, PsbB, PsbC, PsbD, PsbE, PsbF, PsbH, PsbI, PsbJ, PsbK, PsbL, PsbM, PsbT, PsbX, PsbY, PsbZ, Psb30/Ycf12, at least 3 peripheral proteins of the oxygen-evolving complex and a large number of cofactors. It forms dimeric complexes. It depends on Binds multiple chlorophylls. PSII binds additional chlorophylls, carotenoids and specific lipids. as a cofactor.

The protein localises to the plastid. The protein resides in the chloroplast thylakoid membrane. One of the components of the core complex of photosystem II (PSII). It binds chlorophyll and helps catalyze the primary light-induced photochemical processes of PSII. PSII is a light-driven water:plastoquinone oxidoreductase, using light energy to abstract electrons from H(2)O, generating O(2) and a proton gradient subsequently used for ATP formation. This chain is Photosystem II CP47 reaction center protein, found in Lotus japonicus (Lotus corniculatus var. japonicus).